Here is a 355-residue protein sequence, read N- to C-terminus: Anthranilate phosphoribosyltransferase (355 aa).

5-phospho-alpha-D-ribose 1-diphosphate-binding positions include G102, 105-106 (GD), S110, 112-115 (NIST), 130-138 (KHGNRSVSS), and S142. G102 is an anthranilate binding site. Residue S114 participates in Mg(2+) binding. Position 133 (N133) interacts with anthranilate. R188 is an anthranilate binding site. 2 residues coordinate Mg(2+): D246 and E247.

Belongs to the anthranilate phosphoribosyltransferase family. In terms of assembly, homodimer. Mg(2+) is required as a cofactor.

The catalysed reaction is N-(5-phospho-beta-D-ribosyl)anthranilate + diphosphate = 5-phospho-alpha-D-ribose 1-diphosphate + anthranilate. It functions in the pathway amino-acid biosynthesis; L-tryptophan biosynthesis; L-tryptophan from chorismate: step 2/5. In terms of biological role, catalyzes the transfer of the phosphoribosyl group of 5-phosphorylribose-1-pyrophosphate (PRPP) to anthranilate to yield N-(5'-phosphoribosyl)-anthranilate (PRA). The sequence is that of Anthranilate phosphoribosyltransferase from Pectobacterium carotovorum subsp. carotovorum (strain PC1).